The following is a 241-amino-acid chain: Terpene cyclase pyr4 (241 aa).

The next 7 membrane-spanning stretches (helical) occupy residues 20-40, 49-69, 79-99, 113-133, 141-161, 168-188, and 206-226; these read IADWALLAQGLGWSINYLAMI, YGMAILPLCCNFAWEFVYSVI, AVLTTWMILNLFVMYTAIKFA, LPWIFPVAIAAFTAGHLALAA, ANWGAFLCFELLTSGAVCQLM, GASYTIWLSRFLGSYIGGIFL, and FVTWHGLMCFSLDIAYVTFLW.

Belongs to the paxB family.

The protein localises to the membrane. It catalyses the reaction 2-oxo-3-[(8S)-epoxy-(2E,6E)-farnesyl]-6-(pyridin-3-yl)-2H-pyran-4-olate + H(+) = deacetylpyripyropene E. It participates in secondary metabolite biosynthesis; terpenoid biosynthesis. In terms of biological role, terpene cyclase; part of the gene cluster that mediates the biosynthesis of pyripyropene A, a specific human acyl-coenzyme A:cholesterol acyltransferase 2 inhibitor. The first step of the pathway is the synthesis of nicotinyl-CoA from nicotinic acid by the nicotinic acid-CoA ligase pyr1. Nicotinyl-CoA is then a substrate of polyketide synthase pyr2 to produce 4-hydroxy-6-(3-pyridinyl)-2H-pyran-2-one (HPPO) which is further prenylated by the polyprenyl transferase pyr6 to yield farnesyl-HPPO. The next steps consist of an epoxidation of farnesyl-HPPO to epoxyfarnesyl-HPPO by FAD-dependent monooxygenase pyr5 and a cyclization of the terpenoid portion by the terpene cyclase pyr4 to yield deacetyl-pyripyropene E. The 2 cytochrome P450 monooxygenases pyr3 and pyr9, and the 2 acetyltransferases pyr7 and pyr8 are involved in the conversion of deacetyl-pyripyropene E into pyripyropene A through several cycles of oxidation and acetylation steps. Pyr7 acetylates deacetyl-pyripyropene E to pyripyropene E which is oxidized to 11-deacetyl-pyripyropene O by pyr3, which is in turn acetylated into pyripyropene O by pyr8. Pyripyropene O is then oxidized to deacetyl-pyripyropene A by pyr9. Deacetyl-pyripyropene A is finally acetylated to pyripyropene A by pyr8. This is Terpene cyclase pyr4 from Aspergillus fumigatus (strain ATCC MYA-4609 / CBS 101355 / FGSC A1100 / Af293) (Neosartorya fumigata).